The primary structure comprises 301 residues: GTPase Era (301 aa).

The Era-type G domain occupies 4 to 173 (KAGFVALIGK…LECISKHLSP (170 aa)). The G1 stretch occupies residues 12-19 (GKPNAGKS). 12–19 (GKPNAGKS) is a GTP binding site. The segment at 38–42 (NATRK) is G2. Residues 64–67 (DTPG) are G3. GTP-binding positions include 64-68 (DTPGL) and 122-125 (SKID). Residues 122–125 (SKID) are G4. Residues 152-154 (LSA) are G5. In terms of domain architecture, KH type-2 spans 204–280 (LSDEIPYESD…FLNLQVIAQK (77 aa)).

It belongs to the TRAFAC class TrmE-Era-EngA-EngB-Septin-like GTPase superfamily. Era GTPase family. As to quaternary structure, monomer.

Its subcellular location is the cytoplasm. It is found in the cell inner membrane. Functionally, an essential GTPase that binds both GDP and GTP, with rapid nucleotide exchange. Plays a role in 16S rRNA processing and 30S ribosomal subunit biogenesis and possibly also in cell cycle regulation and energy metabolism. This Helicobacter pylori (strain Shi470) protein is GTPase Era.